The chain runs to 91 residues: Small ribosomal subunit protein bS18 (91 aa).

A compositionally biased stretch (low complexity) spans 1-14 (MTNQNQSQTQTTQT). The disordered stretch occupies residues 1–24 (MTNQNQSQTQTTQTVEKVSSRQKK).

This sequence belongs to the bacterial ribosomal protein bS18 family. Part of the 30S ribosomal subunit. Forms a tight heterodimer with protein bS6.

In terms of biological role, binds as a heterodimer with protein bS6 to the central domain of the 16S rRNA, where it helps stabilize the platform of the 30S subunit. The polypeptide is Small ribosomal subunit protein bS18 (Caldicellulosiruptor saccharolyticus (strain ATCC 43494 / DSM 8903 / Tp8T 6331)).